Consider the following 546-residue polypeptide: Glucose-6-phosphate isomerase (546 aa).

Glu357 (proton donor) is an active-site residue. Catalysis depends on residues His389 and Lys509.

This sequence belongs to the GPI family.

Its subcellular location is the cytoplasm. The enzyme catalyses alpha-D-glucose 6-phosphate = beta-D-fructose 6-phosphate. The protein operates within carbohydrate biosynthesis; gluconeogenesis. It functions in the pathway carbohydrate degradation; glycolysis; D-glyceraldehyde 3-phosphate and glycerone phosphate from D-glucose: step 2/4. Functionally, catalyzes the reversible isomerization of glucose-6-phosphate to fructose-6-phosphate. The protein is Glucose-6-phosphate isomerase of Anaeromyxobacter sp. (strain K).